The sequence spans 87 residues: Toxin CsEv2 (87 aa).

Residues 1-19 (MNSLLIITACLFLIGTVWA) form the signal peptide. One can recognise an LCN-type CS-alpha/beta domain in the interval 20–85 (KEGYLVNKST…TYPLPNKSCS (66 aa)). Cystine bridges form between C31-C84, C35-C60, C44-C65, and C48-C67.

It belongs to the long (4 C-C) scorpion toxin superfamily. Sodium channel inhibitor family. Beta subfamily. In terms of tissue distribution, expressed by the venom gland.

It localises to the secreted. Beta toxins bind voltage-independently at site-4 of sodium channels (Nav) and shift the voltage of activation toward more negative potentials thereby affecting sodium channel activation and promoting spontaneous and repetitive firing. Induces immediate paralysis in crickets after injection, with a total paralysis occurring within 15-30 minutes and lasting for 1-2 hours. Is also lethal to vertebrate (chicks) when injected in very high dosages (more that 100 mg/kg). The protein is Toxin CsEv2 of Centruroides sculpturatus (Arizona bark scorpion).